We begin with the raw amino-acid sequence, 391 residues long: Protein Wnt-2b (391 aa).

Disulfide bonds link cysteine 107/cysteine 118, cysteine 158/cysteine 166, cysteine 168/cysteine 188, cysteine 237/cysteine 251, and cysteine 239/cysteine 246. An N-linked (GlcNAc...) asparagine glycan is attached at asparagine 117. A lipid anchor (O-palmitoleoyl serine; by PORCN) is attached at serine 243. Residue asparagine 283 is glycosylated (N-linked (GlcNAc...) asparagine). 6 cysteine pairs are disulfide-bonded: cysteine 309/cysteine 340, cysteine 325/cysteine 335, cysteine 339/cysteine 379, cysteine 355/cysteine 370, cysteine 357/cysteine 367, and cysteine 362/cysteine 363.

The protein belongs to the Wnt family. As to quaternary structure, forms a soluble 1:1 complex with AFM; this prevents oligomerization and is required for prolonged biological activity. The complex with AFM may represent the physiological form in body fluids. Interacts with FZD4 and FZD5. In terms of processing, palmitoleoylation is required for efficient binding to frizzled receptors. Depalmitoleoylation leads to Wnt signaling pathway inhibition. In terms of tissue distribution, isoform 1 is expressed in adult heart, brain, placenta, lung, prostate, testis, ovary, small intestine and colon. In the adult brain, it is mainly found in the caudate nucleus, subthalamic nucleus and thalamus. Also detected in fetal brain, lung and kidney. Isoform 2 is expressed in fetal brain, fetal lung, fetal kidney, caudate nucleus, testis and cancer cell lines.

Its subcellular location is the secreted. It is found in the extracellular space. The protein resides in the extracellular matrix. In terms of biological role, ligand for members of the frizzled family of seven transmembrane receptors. Functions in the canonical Wnt/beta-catenin signaling pathway. Plays a redundant role in embryonic lung development. The protein is Protein Wnt-2b (WNT2B) of Homo sapiens (Human).